We begin with the raw amino-acid sequence, 327 residues long: Biotin synthase (327 aa).

The region spanning 51-278 (QTIQLSTLMS…KSYVRLSAGR (228 aa)) is the Radical SAM core domain. [4Fe-4S] cluster contacts are provided by cysteine 66, cysteine 70, and cysteine 73. 4 residues coordinate [2Fe-2S] cluster: cysteine 110, cysteine 141, cysteine 201, and arginine 273.

This sequence belongs to the radical SAM superfamily. Biotin synthase family. As to quaternary structure, homodimer. It depends on [4Fe-4S] cluster as a cofactor. [2Fe-2S] cluster is required as a cofactor.

The catalysed reaction is (4R,5S)-dethiobiotin + (sulfur carrier)-SH + 2 reduced [2Fe-2S]-[ferredoxin] + 2 S-adenosyl-L-methionine = (sulfur carrier)-H + biotin + 2 5'-deoxyadenosine + 2 L-methionine + 2 oxidized [2Fe-2S]-[ferredoxin]. It functions in the pathway cofactor biosynthesis; biotin biosynthesis; biotin from 7,8-diaminononanoate: step 2/2. Catalyzes the conversion of dethiobiotin (DTB) to biotin by the insertion of a sulfur atom into dethiobiotin via a radical-based mechanism. In Histophilus somni (strain 2336) (Haemophilus somnus), this protein is Biotin synthase.